Here is a 560-residue protein sequence, read N- to C-terminus: Choline/ethanolamine transporter FLVCR1 (560 aa).

Positions 1–43 are disordered; it reads MARPDDEVGPAVAPGHPLGKGYLPVPKGAPDGEARLVPQNGPE. Residues 1 to 92 lie on the Cytoplasmic side of the membrane; it reads MARPDDEVGP…EDVPCPACPP (92 aa). Residues 93-117 form a helical membrane-spanning segment; sequence RTALSPRRFVVLLIFSLYSLVNAFQ. Residues 118-135 are Extracellular-facing; sequence WIQYSSISNVFEDFYEVS. The chain crosses the membrane as a helical span at residues 136 to 163; it reads PLHINWLSMVYMVAYVPLIFPATWLLDT. Over 164-165 the chain is Cytoplasmic; it reads RG. The chain crosses the membrane as a helical span at residues 166–185; it reads LRLTALLGSGLNCLGAWVKC. Topologically, residues 186 to 192 are extracellular; that stretch reads GSVQRHL. A helical transmembrane segment spans residues 193 to 221; that stretch reads FWVTMLGQILCSVAQVFILGLPSPVASVW. Q207 serves as a coordination point for ethanolamine. The Cytoplasmic segment spans residues 222-226; the sequence is FGPKE. Residues 227 to 252 traverse the membrane as a helical segment; the sequence is VSTACATAVLGNQLGTAVGFLLPPVL. At 253-270 the chain is on the extracellular side; sequence VPALGTQNNTGLLAHTQN. N270 carries N-linked (GlcNAc...) asparagine glycosylation. Residues 271 to 300 traverse the membrane as a helical segment; that stretch reads NTDLLAHNINTMFYGTAFISTFLFFLTVIA. At 301 to 336 the chain is on the cytoplasmic side; it reads FKEKPPLPPSQAQAILRDSPPEEYSYKSSIWNLCRN. Residues 337–367 form a helical membrane-spanning segment; that stretch reads IPFVLLLVSYGIMTGAFYSISTLLNQIILTY. Residues 368–371 are Extracellular-facing; it reads YVGE. Residues 372 to 400 traverse the membrane as a helical segment; the sequence is EVNAGRIGLTLVVAGMVGSILCGLWLDYT. Topologically, residues 401-402 are cytoplasmic; it reads KT. A helical transmembrane segment spans residues 403–425; that stretch reads YKQTTLIVYVLSFIGMLIFTFTL. At 426 to 428 the chain is on the extracellular side; that stretch reads NLG. The chain crosses the membrane as a helical span at residues 429–458; it reads YIVALFFTGGILGFFMTGYLPLGFEFAVEI. Residues 459–466 lie on the Cytoplasmic side of the membrane; the sequence is TYPESEGM. Residues 467–492 traverse the membrane as a helical segment; the sequence is SSGLLNTAAQILGIFFTLAQGKITTD. Q476 serves as a coordination point for ethanolamine. Position 476 (Q476) interacts with choline. The Extracellular portion of the chain corresponds to 493 to 495; it reads YNS. The chain crosses the membrane as a helical span at residues 496–518; it reads PEAGNIFLCAWMFVGIILTALIK. The Cytoplasmic portion of the chain corresponds to 519-560; that stretch reads SDLRRHNINTGLTNIDVKAVPVDSRVDPKPKAMVSIQSESSL. Phosphoserine is present on S542.

Belongs to the major facilitator superfamily. Feline leukemia virus subgroup C receptor (TC 2.A.1.28.1) family.

The protein resides in the cell membrane. The catalysed reaction is choline(out) = choline(in). It catalyses the reaction ethanolamine(in) = ethanolamine(out). It carries out the reaction heme b(in) = heme b(out). Functionally, uniporter that mediates the transport of extracellular choline and ethanolamine into cells, thereby playing a key role in phospholipid biosynthesis. Choline and ethanolamine are the precursors of phosphatidylcholine and phosphatidylethanolamine, respectively, the two most abundant phospholipids. Transport is not coupled with proton transport and is exclusively driven by the choline (or ethanolamine) gradient across the plasma membrane. Also acts as a heme b transporter that mediates heme efflux from the cytoplasm to the extracellular compartment. This is Choline/ethanolamine transporter FLVCR1 (Flvcr1) from Mus terricolor (Earth-colored mouse).